Reading from the N-terminus, the 101-residue chain is Small ribosomal subunit protein uS14 (101 aa).

The protein belongs to the universal ribosomal protein uS14 family. Part of the 30S ribosomal subunit. Contacts proteins S3 and S10.

In terms of biological role, binds 16S rRNA, required for the assembly of 30S particles and may also be responsible for determining the conformation of the 16S rRNA at the A site. This is Small ribosomal subunit protein uS14 from Vibrio vulnificus (strain CMCP6).